A 311-amino-acid chain; its full sequence is Pseudouridine-5'-phosphate glycosidase (311 aa).

Glu32 serves as the catalytic Proton donor. Residues Lys96 and Val116 each coordinate substrate. Asp148 contributes to the Mn(2+) binding site. 150–152 (SAD) provides a ligand contact to substrate. Lys169 acts as the Nucleophile in catalysis.

This sequence belongs to the pseudouridine-5'-phosphate glycosidase family. In terms of assembly, homotrimer. It depends on Mn(2+) as a cofactor.

It carries out the reaction D-ribose 5-phosphate + uracil = psi-UMP + H2O. Its function is as follows. Catalyzes the reversible cleavage of pseudouridine 5'-phosphate (PsiMP) to ribose 5-phosphate and uracil. Functions biologically in the cleavage direction, as part of a pseudouridine degradation pathway. The polypeptide is Pseudouridine-5'-phosphate glycosidase (Roseiflexus sp. (strain RS-1)).